The primary structure comprises 134 residues: Putative thioredoxin 2 (134 aa).

In terms of domain architecture, Thioredoxin spans 3–106 (STVELTKENF…LTDVIGQARK (104 aa)). Cysteine 31 and cysteine 34 form a disulfide bridge. Residues 115-134 (AVAEQQAQAGQNGQEGQEGQ) form a disordered region. Over residues 117–134 (AEQQAQAGQNGQEGQEGQ) the composition is skewed to low complexity.

This sequence belongs to the thioredoxin family.

The protein localises to the cytoplasm. Functionally, component of the thioredoxin-thioredoxin reductase system. Participates in various redox reactions through the reversible oxidation of its active center dithiol to a disulfide and catalyzes dithiol-disulfide exchange reactions. The polypeptide is Putative thioredoxin 2 (trxC) (Streptomyces coelicolor (strain ATCC BAA-471 / A3(2) / M145)).